Reading from the N-terminus, the 210-residue chain is N-(5'-phosphoribosyl)anthranilate isomerase (210 aa).

It belongs to the TrpF family.

It carries out the reaction N-(5-phospho-beta-D-ribosyl)anthranilate = 1-(2-carboxyphenylamino)-1-deoxy-D-ribulose 5-phosphate. It functions in the pathway amino-acid biosynthesis; L-tryptophan biosynthesis; L-tryptophan from chorismate: step 3/5. The polypeptide is N-(5'-phosphoribosyl)anthranilate isomerase (Magnetococcus marinus (strain ATCC BAA-1437 / JCM 17883 / MC-1)).